A 401-amino-acid polypeptide reads, in one-letter code: E3 ubiquitin-protein ligase NHLRC1 (401 aa).

An RING-type zinc finger spans residues 28 to 74; that stretch reads CKVCFERFGHWQQRRPRNLPCGHVVCLACVAALAHPRTLGLECPFCR. 6 NHL repeats span residues 115 to 159, 163 to 206, 207 to 247, 250 to 303, 304 to 352, and 353 to 396; these read TLTC…FDSG, AHQF…FDFF, GQIK…LEAD, EGVL…FNST, MQLI…LGKP, and EEFP…FKVM.

In terms of assembly, interacts with AGL. Interacts (via the NHL repeats) with EPM2A/laforin. Forms a complex with EPM2A/laforin and HSP70. Interacts with PRDM8.

The protein localises to the endoplasmic reticulum. It is found in the nucleus. It catalyses the reaction S-ubiquitinyl-[E2 ubiquitin-conjugating enzyme]-L-cysteine + [acceptor protein]-L-lysine = [E2 ubiquitin-conjugating enzyme]-L-cysteine + N(6)-ubiquitinyl-[acceptor protein]-L-lysine.. Its pathway is protein modification; protein ubiquitination. In terms of biological role, E3 ubiquitin-protein ligase. Together with the phosphatase EPM2A/laforin, appears to be involved in the clearance of toxic polyglucosan and protein aggregates via multiple pathways. In complex with EPM2A/laforin and HSP70, suppresses the cellular toxicity of misfolded proteins by promoting their degradation through the ubiquitin-proteasome system (UPS). Ubiquitinates the glycogen-targeting protein phosphatase subunits PPP1R3C/PTG and PPP1R3D in a laforin-dependent manner and targets them for proteasome-dependent degradation, thus decreasing glycogen accumulation. Polyubiquitinates EPM2A/laforin and ubiquitinates AGL and targets them for proteasome-dependent degradation. Also promotes proteasome-independent protein degradation through the macroautophagy pathway. This Mus musculus (Mouse) protein is E3 ubiquitin-protein ligase NHLRC1 (Nhlrc1).